Consider the following 591-residue polypeptide: Aspartate--tRNA(Asp/Asn) ligase (591 aa).

An L-aspartate-binding site is contributed by E176. Residues 200–203 (QLFK) form an aspartate region. Residue R222 coordinates L-aspartate. Residues 222–224 (RDE) and Q231 contribute to the ATP site. H450 is a binding site for L-aspartate. E484 provides a ligand contact to ATP. Position 491 (R491) interacts with L-aspartate. 536 to 539 (GLDR) is a binding site for ATP.

This sequence belongs to the class-II aminoacyl-tRNA synthetase family. Type 1 subfamily. In terms of assembly, homodimer.

It is found in the cytoplasm. The catalysed reaction is tRNA(Asx) + L-aspartate + ATP = L-aspartyl-tRNA(Asx) + AMP + diphosphate. Its function is as follows. Aspartyl-tRNA synthetase with relaxed tRNA specificity since it is able to aspartylate not only its cognate tRNA(Asp) but also tRNA(Asn). Reaction proceeds in two steps: L-aspartate is first activated by ATP to form Asp-AMP and then transferred to the acceptor end of tRNA(Asp/Asn). The sequence is that of Aspartate--tRNA(Asp/Asn) ligase from Bacillus anthracis (strain A0248).